We begin with the raw amino-acid sequence, 589 residues long: Polypeptide N-acetylgalactosaminyltransferase 4 (589 aa).

Residues 1-11 lie on the Cytoplasmic side of the membrane; it reads MLPRMLKMKTV. A helical; Signal-anchor for type II membrane protein membrane pass occupies residues 12 to 31; it reads GTVLAVIWLFGLAFIYVQST. Topologically, residues 32-589 are lumenal; it reads SSSLRPPGRH…WIFEKLDTYE (558 aa). The segment at 33-73 is disordered; the sequence is SSLRPPGRHPPPLPQLDPLIPQNPPQNDEIRPKKSAPPIPT. 5 cysteine pairs are disulfide-bonded: C140–C369, C360–C438, C471–C488, C514–C531, and C553–C571. The segment at 150–255 is catalytic subdomain A; that stretch reads MQPTTVIITY…QKWLEPLLAR (106 aa). Positions 191 and 216 each coordinate substrate. D239 serves as a coordination point for Mn(2+). S240 lines the substrate pocket. H241 provides a ligand contact to Mn(2+). The interval 315–377 is catalytic subdomain B; that stretch reads PIRSPTMAGG…PCSRVGHVFR (63 aa). W346 is a binding site for substrate. H374 provides a ligand contact to Mn(2+). 3 residues coordinate substrate: R377, H380, and Y382. Residues 458–589 enclose the Ricin B-type lectin domain; sequence TPGKSFQMKI…WIFEKLDTYE (132 aa). N523 carries N-linked (GlcNAc...) asparagine glycosylation.

The protein belongs to the glycosyltransferase 2 family. GalNAc-T subfamily. The cofactor is Mn(2+).

Its subcellular location is the golgi apparatus membrane. The enzyme catalyses L-seryl-[protein] + UDP-N-acetyl-alpha-D-galactosamine = a 3-O-[N-acetyl-alpha-D-galactosaminyl]-L-seryl-[protein] + UDP + H(+). It catalyses the reaction L-threonyl-[protein] + UDP-N-acetyl-alpha-D-galactosamine = a 3-O-[N-acetyl-alpha-D-galactosaminyl]-L-threonyl-[protein] + UDP + H(+). The protein operates within protein modification; protein glycosylation. Functionally, catalyzes the initial reaction in O-linked oligosaccharide biosynthesis, the transfer of an N-acetyl-D-galactosamine residue to a serine or threonine residue on the protein receptor. The chain is Polypeptide N-acetylgalactosaminyltransferase 4 (gly-4) from Caenorhabditis elegans.